A 259-amino-acid chain; its full sequence is Ribonuclease PH (259 aa).

Residues Arg-88 and 126-128 contribute to the phosphate site; that span reads GTR.

Belongs to the RNase PH family. As to quaternary structure, homohexameric ring arranged as a trimer of dimers.

It catalyses the reaction tRNA(n+1) + phosphate = tRNA(n) + a ribonucleoside 5'-diphosphate. Its function is as follows. Phosphorolytic 3'-5' exoribonuclease that plays an important role in tRNA 3'-end maturation. Removes nucleotide residues following the 3'-CCA terminus of tRNAs; can also add nucleotides to the ends of RNA molecules by using nucleoside diphosphates as substrates, but this may not be physiologically important. Probably plays a role in initiation of 16S rRNA degradation (leading to ribosome degradation) during starvation. This Mycobacterium bovis (strain ATCC BAA-935 / AF2122/97) protein is Ribonuclease PH.